We begin with the raw amino-acid sequence, 578 residues long: Solute carrier family 15 member 3 (578 aa).

A compositionally biased stretch (basic and acidic residues) spans 1–15 (MSAPRAEEQPSRSGE). Residues 1–27 (MSAPRAEEQPSRSGERQPLVARGPRGP) form a disordered region. 5 helical membrane passes run 33–53 (TAAA…FGVT), 77–97 (LLFL…ADVY), 102–122 (LTIS…LTTI), 155–175 (PYCA…ASSV), and 201–221 (WFYW…AFIE). Asn223 carries N-linked (GlcNAc...) asparagine glycosylation. The chain crosses the membrane as a helical span at residues 232 to 252 (IIVGLVGLAFFIFLFATPVFI). The disordered stretch occupies residues 280–301 (SRDSESAHLLPDQRSNQPGPSP). A helical membrane pass occupies residues 308-328 (FQVLVKILPVMVTLVPYWMVY). Asn353 is a glycosylation site (N-linked (GlcNAc...) asparagine). The next 2 membrane-spanning stretches (helical) occupy residues 367–387 (IPEA…IPVK) and 405–425 (LQKM…AGVL). N-linked (GlcNAc...) asparagine glycosylation occurs at Asn436. The next 3 membrane-spanning stretches (helical) occupy residues 462-481 (YLLI…EFAY), 494-514 (GIFF…VALL), and 538-558 (YFFL…WIAG).

The protein belongs to the major facilitator superfamily. Proton-dependent oligopeptide transporter (POT/PTR) (TC 2.A.17) family. As to expression, expressed highly in bone marrow derived macrophages, and weakly in spleen and lung. Expressed in plasmacytoid dendritic cells (pDCs) in response to toll-like receptors (TLR) stimulation.

Its subcellular location is the lysosome membrane. It localises to the endosome membrane. It catalyses the reaction N-acetyl-D-muramoyl-L-alanyl-D-isoglutamine(out) + n H(+)(out) = N-acetyl-D-muramoyl-L-alanyl-D-isoglutamine(in) + n H(+)(in). The catalysed reaction is glycylglycylglycine(out) + n H(+)(out) = glycylglycylglycine(in) + n H(+)(in). The enzyme catalyses carnosine(out) + n H(+)(out) = carnosine(in) + n H(+)(in). It carries out the reaction L-histidine(out) + n H(+)(out) = L-histidine(in) + n H(+)(in). In terms of biological role, proton-coupled amino-acid transporter that transports free histidine and certain di- and tripeptides, and is involved in innate immune response. Also able to transport carnosine. Involved in the detection of microbial pathogens by toll-like receptors (TLRs) and NOD-like receptors (NLRs), probably by mediating transport of bacterial peptidoglycans across the endolysosomal membrane: catalyzes the transport of certain bacterial peptidoglycans, such as muramyl dipeptide (MDP), the NOD2 ligand. The polypeptide is Solute carrier family 15 member 3 (Mus musculus (Mouse)).